The chain runs to 162 residues: Ribosome maturation factor RimP (162 aa).

It belongs to the RimP family.

The protein resides in the cytoplasm. Its function is as follows. Required for maturation of 30S ribosomal subunits. The sequence is that of Ribosome maturation factor RimP from Leptospira biflexa serovar Patoc (strain Patoc 1 / Ames).